Reading from the N-terminus, the 187-residue chain is uncharacterized protein (187 aa).

Residues 3-23 form a helical membrane-spanning segment; it reads AIIIFLILFIVGVLIGVGVYY.

It is found in the membrane. This is an uncharacterized protein from Methanocaldococcus jannaschii (strain ATCC 43067 / DSM 2661 / JAL-1 / JCM 10045 / NBRC 100440) (Methanococcus jannaschii).